The following is a 77-amino-acid chain: DNA-directed RNA polymerase subunit omega (77 aa).

This sequence belongs to the RNA polymerase subunit omega family. In terms of assembly, the RNAP catalytic core consists of 2 alpha, 1 beta, 1 beta' and 1 omega subunit. When a sigma factor is associated with the core the holoenzyme is formed, which can initiate transcription.

The catalysed reaction is RNA(n) + a ribonucleoside 5'-triphosphate = RNA(n+1) + diphosphate. Functionally, promotes RNA polymerase assembly. Latches the N- and C-terminal regions of the beta' subunit thereby facilitating its interaction with the beta and alpha subunits. In Dichelobacter nodosus (strain VCS1703A), this protein is DNA-directed RNA polymerase subunit omega.